The following is a 196-amino-acid chain: Protein TEX261 (196 aa).

Helical transmembrane passes span 3 to 23 (FMYL…TLAV), 42 to 62 (SRII…LYVF), 70 to 90 (IGVG…FPFI), 97 to 117 (FILS…FFAE), and 125 to 145 (VLAY…VSLS).

This sequence belongs to the SVP26 family.

The protein localises to the membrane. The sequence is that of Protein TEX261 (TEX261) from Homo sapiens (Human).